Reading from the N-terminus, the 1754-residue chain is MSSMKWLSATAVFAAVLPSVSGFCFPEPKELNFSRVGTSSSTTFTETVGEAGAEYIVSGNASFTKFTNIPTTDTTTPTNSNSSSSNGETASVSEDSDSTTTTPDPKGGGAFYNAHSGVLSFMTRSGTEGSLTLSEIKITGEGGAIFSQGELLFTDLTGLTIQNNLSQLSGGAIFGESTISLSGITKATFSSNSAEVPAPVKKPTEPKAQTASETSGSSSSSGNDSVSSPSSSRAEPAAANLQSHFICATATPAAQTDTETSTPSHKPGSGGAIYAKGDLTIADSQEVLFSINKATKDGGAIFAEKDVSFENITSLKVQTNGAEEKGGAIYAKGDLSIQSSKQSLFNSNYSKQGGGALYVEGDINFQDLEEIRIKYNKAGTFETKKITLPKAQASAGNADAWASSSPQSGSGATTVSNSGDSSSGSDSDTSETVPATAKGGGLYTDKNLSITNITGIIEIANNKATDVGGGAYVKGTLTCENSHRLQFLKNSSDKQGGGIYGEDNITLSNLTGKTLFQENTAKEEGGGLFIKGTDKALTMTGLDSFCLINNTSEKHGGGAFVTKEISQTYTSDVETIPGITPVHGETVITGNKSTGGNGGGVCTKRLALSNLQSISISGNSAAENGGGAHTCPDSFPTADTAEQPAAASAATSTPESAPVVSTALSTPSSSTVSSLTLLAASSQASPATSNKETQDPNADTDLLIDYVVDTTISKNTAKKGGGIYAKKAKMSRIDQLNISENSATEIGGGICCKESLELDALVSLSVTENLVGKEGGGLHAKTVNISNLKSGFSFSNNKANSSSTGVATTASAPAAAAASLQAAAAAVPSSPATPTYSGVVGGAIYGEKVTFSQCSGTCQFSGNQAIDNNPSQSSLNVQGGAIYAKTSLSIGSSDAGTSYIFSGNSVSTGKSQTTGQIAGGAIYSPTVTLNCPATFSNNTASMATPKTSSEDGSSGNSIKDTIGGAIAGTAITLSGVSRFSGNTADLGAAIGTLANANTPSATSGSQNSITEKITLENGSFIFERNQANKRGAIYSPSVSIKGNNITFNQNTSTHDGSAIYFTKDATIESLGSVLFTGNNVTATQASSATSGQNTNTANYGAAIFGDPGTTQSSQTDAILTLLASSGNITFSNNSLQNNQGDTPASKFCSIAGYVKLSLQAAKGKTISFFDCVHTSTKKIGSTQNVYETLDINKEENSNPYTGTIVFSSELHENKSYIPQNAILHNGTLVLKEKTELHVVSFEQKEGSKLIMKPGAVLSNQNIANGALVINGLTIDLSSMGTPQAGEIFSPPELRIVATTSSASGGSGVSSSIPTNPKRISAAAPSGSAATTPTMSENKVFLTGDLTLIDPNGNFYQNPMLGSDLDVPLIKLPTNTSDVQVYDLTLSGDLFPQKGYMGTWTLDSNPQTGKLQARWTFDTYRRWVYIPRDNHFYANSILGSQNSMIVVKQGLINNMLNNARFDDIAYNNFWVSGVGTFLAQQGTPLSEEFSYYSRGTSVAIDAKPRQDFILGAAFSKMVGKTKAIKKMHNYFHKGSEYSYQASVYGGKFLYFLLNKQHGWALPFLIQGVVSYGHIKHDTTTLYPSIHERNKGDWEDLGWLADLRISMDLKEPSKDSSKRITVYGELEYSSIRQKQFTEIDYDPRHFDDCAYRNLSLPVGCAVEGAIMNCNILMYNKLALAYMPSIYRNNPVCKYRVLSSNEAGQVICGVPTRTSARAEYSTQLYLGPFWTLYGNYTIDVGMYTLSQMTSCGARMIF.

A signal peptide spans 1–14 (MSSMKWLSATAVFA). Composition is skewed to low complexity over residues 68–105 (NIPT…TPDP) and 212–232 (SETS…PSSS). 6 disordered regions span residues 68–109 (NIPT…KGGG), 190–235 (SSNS…SRAE), 252–271 (PAAQ…GSGG), 397–438 (NADA…ATAK), 621–668 (AAEN…STPS), and 1299–1332 (TSSA…ATTP). Polar residues-rich tracts occupy residues 252 to 264 (PAAQ…STPS) and 402 to 412 (ASSSPQSGSGA). Low complexity-rich tracts occupy residues 413 to 427 (TTVS…GSDS), 636 to 668 (PTAD…STPS), 1299 to 1311 (TSSA…VSSS), and 1320 to 1332 (SAAA…ATTP). The 294-residue stretch at 1461 to 1754 (DDIAYNNFWV…MTSCGARMIF (294 aa)) folds into the Autotransporter domain.

It belongs to the PMP outer membrane protein family.

It localises to the secreted. The protein localises to the cell wall. Its subcellular location is the cell outer membrane. The protein is Probable outer membrane protein PmpB (pmpB) of Chlamydia trachomatis serovar D (strain ATCC VR-885 / DSM 19411 / UW-3/Cx).